A 340-amino-acid chain; its full sequence is N-acetyl-gamma-glutamyl-phosphate reductase (340 aa).

Cys-147 is an active-site residue.

Belongs to the NAGSA dehydrogenase family. Type 1 subfamily.

Its subcellular location is the cytoplasm. It catalyses the reaction N-acetyl-L-glutamate 5-semialdehyde + phosphate + NADP(+) = N-acetyl-L-glutamyl 5-phosphate + NADPH + H(+). It participates in amino-acid biosynthesis; L-arginine biosynthesis; N(2)-acetyl-L-ornithine from L-glutamate: step 3/4. Its function is as follows. Catalyzes the NADPH-dependent reduction of N-acetyl-5-glutamyl phosphate to yield N-acetyl-L-glutamate 5-semialdehyde. The protein is N-acetyl-gamma-glutamyl-phosphate reductase of Lactococcus lactis subsp. lactis (strain IL1403) (Streptococcus lactis).